The primary structure comprises 183 residues: Inosine/xanthosine triphosphatase (183 aa).

Residue Asp75 participates in Mg(2+) binding. 75–76 is a substrate binding site; the sequence is DG.

It belongs to the YjjX NTPase family. As to quaternary structure, homodimer. Mg(2+) serves as cofactor. The cofactor is Mn(2+).

The enzyme catalyses XTP + H2O = XDP + phosphate + H(+). It catalyses the reaction ITP + H2O = IDP + phosphate + H(+). Functionally, phosphatase that hydrolyzes non-canonical purine nucleotides such as XTP and ITP to their respective diphosphate derivatives. Probably excludes non-canonical purines from DNA/RNA precursor pool, thus preventing their incorporation into DNA/RNA and avoiding chromosomal lesions. This is Inosine/xanthosine triphosphatase from Vibrio vulnificus (strain YJ016).